The sequence spans 766 residues: FYVE, RhoGEF and PH domain-containing protein 4 (766 aa).

Residues 1-150 form an actin filament-binding region; that stretch reads MEESNPAPTS…SSIANSHDEN (150 aa). Composition is skewed to polar residues over residues 47-62 and 70-85; these read LNIPQTLGQPGLTSSP and HSPQKQENDPDQTQGQ. 2 disordered regions span residues 47-86 and 143-173; these read LNIPQTLGQPGLTSSPPRKFLPQHSPQKQENDPDQTQGQH and IANSHDENASDSSCRTPGTDLGLPSKEGEPG. Residues 206 to 393 enclose the DH domain; it reads KLHKIATELL…STAASHSNSA (188 aa). The PH 1 domain maps to 422-521; it reads ELIKEGQILK…WIKALQESID (100 aa). Residues 559–619 form an FYVE-type zinc finger; that stretch reads DNEVTMCMKC…VCKDCYQIIS (61 aa). Residues Cys-565, Cys-568, Cys-582, Cys-585, Cys-590, Cys-593, Cys-611, and Cys-614 each coordinate Zn(2+). The 98-residue stretch at 643-740 folds into the PH 2 domain; it reads NSEVCSFLQY…WLKIILLAVT (98 aa). Phosphoserine is present on residues Ser-702 and Ser-716. Residues 746-766 form a disordered region; sequence GPSEHLATLNNLPGPKKKSEC.

As to quaternary structure, homooligomer. As to expression, detected in thymus, lung, heart, skeletal muscle, small intestine, liver, kidney, spleen and testis. Expressed in all parts of the brain and in the spinal cord at embryonic, postnatal, and adult stages. Levels of expression are lower in postnatal and adult tissues than in embryonic tissues.

It localises to the cytoplasm. The protein localises to the cytoskeleton. Its subcellular location is the cell projection. It is found in the filopodium. Its function is as follows. Activates CDC42, a member of the Ras-like family of Rho- and Rac proteins, by exchanging bound GDP for free GTP. Activates MAPK8. Plays a role in regulating the actin cytoskeleton and cell shape. Promotes the formation of lamellipodia. This chain is FYVE, RhoGEF and PH domain-containing protein 4 (Fgd4), found in Mus musculus (Mouse).